The chain runs to 902 residues: Gamma-tubulin complex component 2 (902 aa).

Phosphotyrosine is present on Tyr-83. The interval 874–902 (AERSQKATPQVPVLRGPPAPAPRVAVTAQ) is disordered.

It belongs to the TUBGCP family. As to quaternary structure, component of the gamma-tubulin ring complex (gTuRC) consisting of TUBGCP2, TUBGCP3, TUBGCP4, TUBGCP5 and TUBGCP6 and gamma-tubulin TUBG1 or TUBG2. TUBGCP2, TUBGCP3, TUBGCP4, TUBGCP5 and TUBGCP6 assemble in a 5:5:2:1:1 stoichiometry; each is associated with a gamma-tubulin, thereby arranging 14 gamma-tubulins in a helical manner. Gamma-tubulin at the first position is blocked by TUBGCP3 at the last position, allowing 13 protafilaments to grow into a microtubule. The gTuRC (via TUBGCP3 and TUBGCP6) interacts with ACTB and MZT1; the interactions form a luminal bridge that stabilizes the initial structure during complex assembly. The gTuRC (via TUBGCP2) interacts with MZT2A/MZT2B and CDK5RAP2 (via CM1 motif); the interactions play a role in gTuRC activation. Interacts with ATF5; the ATF5:PCNT:polyglutamylated tubulin (PGT) tripartite unites the mother centriole and the pericentriolar material (PCM) in the centrosome. Ubiquitously expressed.

It localises to the cytoplasm. It is found in the cytoskeleton. The protein localises to the microtubule organizing center. The protein resides in the centrosome. Functionally, component of the gamma-tubulin ring complex (gTuRC) which mediates microtubule nucleation. The gTuRC regulates the minus-end nucleation of alpha-beta tubulin heterodimers that grow into microtubule protafilaments, a critical step in centrosome duplication and spindle formation. Plays a role in neuronal migration. The protein is Gamma-tubulin complex component 2 (TUBGCP2) of Homo sapiens (Human).